Consider the following 621-residue polypeptide: Rab11 family-interacting protein 4A (621 aa).

EF-hand domains lie at 14-49 (AFLKKLKEVFDVCDEDADGYIRVEHFVDLGLQFGQG) and 47-82 (GQGDEVKKFAKYLDPNAHGRINFKDFCHGVFAIKGC). The Ca(2+) site is built by Asp-27, Asp-29, Asp-31, Tyr-33, His-38, Asp-60, Asn-62, Arg-66, and Asp-71. 2 disordered regions span residues 132 to 172 (YSDE…KEEG) and 203 to 243 (DYGE…GQTP). Residues 151-161 (AADSGAGSESS) show a composition bias toward low complexity. Residues 162-172 (EGGRQDDKEEG) show a composition bias toward basic and acidic residues. Polar residues predominate over residues 225–243 (TNGFSDLGSSLPSSAGQTP). Positions 348–556 (DLKSKLKQEN…LNGQILSLSL (209 aa)) form a coiled coil. The 63-residue stretch at 558–620 (EAKNLFACHT…DHNPSILEIK (63 aa)) folds into the FIP-RBD domain.

Homodimer. Forms a complex with Rab11 (rab11a or rab11b) and arf6. Isoform 1 is predominantly expressed in neural tissues. Isoform B is expressed ubiquitously. In the developing retina, it is expressed in progenitors throughout the retina at early stages and becomes restricted to the ganglion cell layer and ciliary marginal zone as differentiation proceeds.

The protein localises to the recycling endosome membrane. It is found in the cleavage furrow. The protein resides in the midbody. Its subcellular location is the cytoplasmic vesicle. In terms of biological role, acts as a regulator of endocytic traffic by participating in membrane delivery. Required for the abscission step in cytokinesis, possibly by acting as an 'address tag' delivering recycling endosome membranes to the cleavage furrow during late cytokinesis. May play a role in differentiation during retinal development. The protein is Rab11 family-interacting protein 4A (rab11fip4a) of Danio rerio (Zebrafish).